Here is an 852-residue protein sequence, read N- to C-terminus: Replication factor C small subunit (852 aa).

One can recognise a DOD-type homing endonuclease domain in the interval 183 to 306 (WLGYFMGSGY…IAYALASFGI (124 aa)).

Belongs to the activator 1 small subunits family. RfcS subfamily. As to quaternary structure, heteromultimer composed of three to four small subunits (RfcS) and one to two large subunits (RfcL). In terms of processing, this protein undergoes a protein self splicing that involves a post-translational excision of the intervening region (intein) followed by peptide ligation.

Its function is as follows. Part of the RFC clamp loader complex which loads the PCNA sliding clamp onto DNA. The complex possesses DNA-dependent ATPase activity which is further stimulated by PCNA. This is Replication factor C small subunit (rfcS) from Pyrococcus furiosus (strain ATCC 43587 / DSM 3638 / JCM 8422 / Vc1).